The primary structure comprises 332 residues: MNVTIYDVAREASVSMATVSRVVNGNPNVKPSTRKKVLETIERLGYRPNAVARGLASKKTTTVGVIIPDISNIFYAELARGIEDIATMYKYNIILSNSDQNQDKELHLLNNMLGKQVDGIIFMSGNVTEEHVEELKKSPVPVVLAASIESTNQIPSVTIDYEQAAFDAVQSLIDSGHKNIAFVSGTLEEPINHAKKVKGYKRALTESGLPVRDSYIVEGDYTYDSGIEAVEKLLEEDEKPTAIFVGTDEMALGVIHGAQDRGLNVPNDLEIIGFDNTRLSTMVRPQLTSVVQPMYDIGAVAMRLLTKYMNKETVDSSIVQLPHRIEFRQSTK.

An HTH lacI-type domain is found at Met-1–Ser-57. The segment at residues Ile-5 to Asn-24 is a DNA-binding region (H-T-H motif).

Functionally, global transcriptional regulator of carbon catabolite repression (CCR) and carbon catabolite activation (CCA), which ensures optimal energy usage under diverse conditions. This chain is Catabolite control protein A (ccpA), found in Priestia megaterium (Bacillus megaterium).